The following is a 102-amino-acid chain: PqqA binding protein (102 aa).

It belongs to the PqqD family. In terms of assembly, monomer. Interacts with PqqE.

Its pathway is cofactor biosynthesis; pyrroloquinoline quinone biosynthesis. Functionally, functions as a PqqA binding protein and presents PqqA to PqqE, in the pyrroloquinoline quinone (PQQ) biosynthetic pathway. This chain is PqqA binding protein, found in Rhodopseudomonas palustris (strain TIE-1).